Reading from the N-terminus, the 103-residue chain is Antitoxin VapB1 (103 aa).

Antitoxin component of a type II toxin-antitoxin (TA) system. Upon expression in E.coli neutralizes the effect of cognate toxin VapC1, partially inhibits the RNase activity of VapC1 in vitro. This is Antitoxin VapB1 (vapB1) from Rickettsia felis (strain ATCC VR-1525 / URRWXCal2) (Rickettsia azadi).